A 37-amino-acid polypeptide reads, in one-letter code: Photosystem II reaction center protein L (37 aa).

The Cytoplasmic segment spans residues 1–13; that stretch reads MEPNPNRQPVELN. A helical membrane pass occupies residues 14-35; that stretch reads RTSLYLGLLLILVLALLFSSYF. The Lumenal segment spans residues 36-37; it reads FN.

PSII is composed of 1 copy each of membrane proteins PsbA, PsbB, PsbC, PsbD, PsbE, PsbF, PsbH, PsbI, PsbJ, PsbK, PsbL, PsbM, PsbT, PsbX, PsbY, PsbZ, Psb30/Ycf12, peripheral proteins PsbO, CyanoQ (PsbQ), PsbU, PsbV and a large number of cofactors. It forms dimeric complexes. Part of a photosystem II (PSII) assembly intermediate complex PSII-I; crystallized from a strain deleted of psbJ, it forms monomeric PSII before addition of the oxygen evolving complex. PSII-I includes 3 assembly factors not found in mature PSII (Psb27, Psb28 and Psb34). Requires PSII binds multiple chlorophylls, carotenoids and specific lipids. as cofactor.

The protein resides in the cellular thylakoid membrane. In terms of biological role, one of the components of the core complex of photosystem II (PSII). PSII is a light-driven water:plastoquinone oxidoreductase that uses light energy to abstract electrons from H(2)O, generating O(2) and a proton gradient subsequently used for ATP formation. It consists of a core antenna complex that captures photons, and an electron transfer chain that converts photonic excitation into a charge separation. This subunit is found at the monomer-monomer interface and is required for correct PSII assembly and/or dimerization. This subunit may make specific contacts with lipid(s). The polypeptide is Photosystem II reaction center protein L (Thermosynechococcus vestitus (strain NIES-2133 / IAM M-273 / BP-1)).